The primary structure comprises 140 residues: Nucleoside triphosphatase NudI (140 aa).

A Nudix hydrolase domain is found at 1 to 140 (MRHRTIVCPL…RVTLSLKGLL (140 aa)). The short motif at 38-58 (GVEPGERIEEALRREIREELG) is the Nudix box element.

It belongs to the Nudix hydrolase family. NudI subfamily. Monomer. Mg(2+) is required as a cofactor.

The catalysed reaction is a ribonucleoside 5'-triphosphate + H2O = a ribonucleoside 5'-phosphate + diphosphate + H(+). It catalyses the reaction a 2'-deoxyribonucleoside 5'-triphosphate + H2O = a 2'-deoxyribonucleoside 5'-phosphate + diphosphate + H(+). It carries out the reaction dUTP + H2O = dUMP + diphosphate + H(+). The enzyme catalyses dTTP + H2O = dTMP + diphosphate + H(+). The catalysed reaction is dCTP + H2O = dCMP + diphosphate + H(+). Its function is as follows. Catalyzes the hydrolysis of nucleoside triphosphates, with a preference for pyrimidine deoxynucleoside triphosphates (dUTP, dTTP and dCTP). This Klebsiella pneumoniae subsp. pneumoniae (strain ATCC 700721 / MGH 78578) protein is Nucleoside triphosphatase NudI.